Here is a 774-residue protein sequence, read N- to C-terminus: Probable E3 ubiquitin-protein ligase HECTD2 (774 aa).

The tract at residues 1–51 (MSEAARDLSPGAPPAVAAAAPEERKGKEPEREKLPPIVTAGAAAGLDRGSK) is disordered. Serine 9 is subject to Phosphoserine. Residues 21 to 34 (PEERKGKEPEREKL) are compositionally biased toward basic and acidic residues. The HECT domain occupies 435-774 (KRADLKKKLK…ISNSEGFGLE (340 aa)). Cysteine 742 (glycyl thioester intermediate) is an active-site residue.

It carries out the reaction S-ubiquitinyl-[E2 ubiquitin-conjugating enzyme]-L-cysteine + [acceptor protein]-L-lysine = [E2 ubiquitin-conjugating enzyme]-L-cysteine + N(6)-ubiquitinyl-[acceptor protein]-L-lysine.. The protein operates within protein modification; protein ubiquitination. Its function is as follows. E3 ubiquitin-protein ligase which accepts ubiquitin from an E2 ubiquitin-conjugating enzyme in the form of a thioester and then directly transfers the ubiquitin to targeted substrates. The chain is Probable E3 ubiquitin-protein ligase HECTD2 (Hectd2) from Mus musculus (Mouse).